The following is a 122-amino-acid chain: MICOS complex subunit MIC13 homolog QIL1 (122 aa).

The chain crosses the membrane as a helical span at residues 9 to 25; it reads GGLVAATVYYTQKVGIW.

This sequence belongs to the MICOS complex subunit Mic13 family. In terms of assembly, component of the mitochondrial contact site and cristae organizing system (MICOS) complex.

It localises to the mitochondrion inner membrane. Functionally, component of the MICOS complex, a large protein complex of the mitochondrial inner membrane that plays crucial roles in the maintenance of crista junctions, inner membrane architecture, and formation of contact sites to the outer membrane. This is MICOS complex subunit MIC13 homolog QIL1 from Drosophila melanogaster (Fruit fly).